A 3184-amino-acid polypeptide reads, in one-letter code: Cilia and flagella-associated protein 47 (3184 aa).

The 123-residue stretch at 1729–1851 (SDSERILLSW…LCVYLYERLP (123 aa)) folds into the Calponin-homology (CH) domain. Residues 2491 to 2514 (RDEEESQEETDTEKDFSSQETPSD) are disordered. A compositionally biased stretch (acidic residues) spans 2493–2502 (EEESQEETDT).

In terms of assembly, interacts with CFAP65. Highly expressed in spermatzoa (at protein level).

Its subcellular location is the cytoplasm. It localises to the cytoskeleton. It is found in the flagellum basal body. Its function is as follows. Plays a role in flagellar formation and sperm motility. The sequence is that of Cilia and flagella-associated protein 47 from Mus musculus (Mouse).